Reading from the N-terminus, the 446-residue chain is N-succinylarginine dihydrolase (446 aa).

Residues 19-28 (AGLSFGNVAS), N110, and 137-138 (HR) each bind substrate. The active site involves E174. R213 lines the substrate pocket. The active site involves H249. Substrate contacts are provided by D251 and N364. Catalysis depends on C370, which acts as the Nucleophile.

This sequence belongs to the succinylarginine dihydrolase family. Homodimer.

The catalysed reaction is N(2)-succinyl-L-arginine + 2 H2O + 2 H(+) = N(2)-succinyl-L-ornithine + 2 NH4(+) + CO2. It participates in amino-acid degradation; L-arginine degradation via AST pathway; L-glutamate and succinate from L-arginine: step 2/5. Catalyzes the hydrolysis of N(2)-succinylarginine into N(2)-succinylornithine, ammonia and CO(2). This is N-succinylarginine dihydrolase from Burkholderia lata (strain ATCC 17760 / DSM 23089 / LMG 22485 / NCIMB 9086 / R18194 / 383).